Consider the following 526-residue polypeptide: Peptide chain release factor 3 (526 aa).

Residues 9-277 (DKRRTFAIIS…GIVEWAPKPL (269 aa)) enclose the tr-type G domain. GTP contacts are provided by residues 18–25 (SHPDAGKT), 86–90 (DTPGH), and 140–143 (NKLD).

Belongs to the TRAFAC class translation factor GTPase superfamily. Classic translation factor GTPase family. PrfC subfamily.

Its subcellular location is the cytoplasm. In terms of biological role, increases the formation of ribosomal termination complexes and stimulates activities of RF-1 and RF-2. It binds guanine nucleotides and has strong preference for UGA stop codons. It may interact directly with the ribosome. The stimulation of RF-1 and RF-2 is significantly reduced by GTP and GDP, but not by GMP. The polypeptide is Peptide chain release factor 3 (Shewanella baltica (strain OS155 / ATCC BAA-1091)).